Here is a 448-residue protein sequence, read N- to C-terminus: Histidinol dehydrogenase (448 aa).

3 residues coordinate NAD(+): Tyr136, Gln197, and Asn220. Substrate contacts are provided by Ser243, Gln265, and His268. Zn(2+) is bound by residues Gln265 and His268. Active-site proton acceptor residues include Glu333 and His334. Positions 334, 367, 421, and 426 each coordinate substrate. Position 367 (Asp367) interacts with Zn(2+). His426 lines the Zn(2+) pocket.

The protein belongs to the histidinol dehydrogenase family. It depends on Zn(2+) as a cofactor.

It catalyses the reaction L-histidinol + 2 NAD(+) + H2O = L-histidine + 2 NADH + 3 H(+). Its pathway is amino-acid biosynthesis; L-histidine biosynthesis; L-histidine from 5-phospho-alpha-D-ribose 1-diphosphate: step 9/9. In terms of biological role, catalyzes the sequential NAD-dependent oxidations of L-histidinol to L-histidinaldehyde and then to L-histidine. The chain is Histidinol dehydrogenase from Pseudomonas savastanoi pv. phaseolicola (strain 1448A / Race 6) (Pseudomonas syringae pv. phaseolicola (strain 1448A / Race 6)).